The chain runs to 445 residues: Phosphatidate cytidylyltransferase 2 (445 aa).

The span at 1-39 (MTELRQRVAREPEAPPEDKESESEAKADGETASDSESRV) shows a compositional bias: basic and acidic residues. The tract at residues 1 to 52 (MTELRQRVAREPEAPPEDKESESEAKADGETASDSESRVEAVTQPPSADDTP) is disordered. S21 is subject to Phosphoserine. Residue T31 is modified to Phosphothreonine. Phosphoserine is present on residues S33, S35, and S37. T51 is modified (phosphothreonine). 6 consecutive transmembrane segments (helical) span residues 79-99 (MIAF…MIVM), 132-152 (FLLC…FFTL), 166-186 (HRFI…LSLV), 213-233 (LVIH…SCVI), 262-282 (GFIG…YVMS), and 340-360 (IALS…ASGF).

It belongs to the CDS family. As to quaternary structure, homodimer.

It is found in the endoplasmic reticulum membrane. The enzyme catalyses a 1,2-diacyl-sn-glycero-3-phosphate + CTP + H(+) = a CDP-1,2-diacyl-sn-glycerol + diphosphate. It carries out the reaction 1-octadecanoyl-2-(5Z,8Z,11Z,14Z-eicosatetraenoyl)-sn-glycero-3-phosphate + CTP + H(+) = 1-octadecanoyl-2-(5Z,8Z,11Z,14Z-eicosatetraenoyl)-sn-glycero-3-cytidine-5'-diphosphate + diphosphate. The catalysed reaction is 1-octadecanoyl-2-(9Z,12Z-octadecadienoyl)-sn-glycero-3-phosphate + CTP + H(+) = 1-octadecanoyl-2-(9Z,12Z-octadecadienoyl)-sn-glycero-3-cytidine-5'-diphosphate + diphosphate. It catalyses the reaction 1-hexadecanoyl-2-(5Z,8Z,11Z,14Z-eicosatetraenoyl)-sn-glycero-3-phosphate + CTP + H(+) = 1-hexadecanoyl-2-(5Z,8Z,11Z,14Z-eicosatetraenoyl)-sn-glycero-3-cytidine-5'-diphosphate + diphosphate. The enzyme catalyses 1,2-di-(5Z,8Z,11Z,14Z)-eicosatetraenoyl-sn-glycero-3-phosphate + CTP + H(+) = 1,2-di-(5Z,8Z,11Z,14Z-eicosatetraenoyl)-sn-glycero-3-cytidine-5'-diphosphate + diphosphate. It carries out the reaction 1-octadecanoyl-2-(9Z-octadecenoyl)-sn-glycero-3-phosphate + CTP + H(+) = 1-octadecanoyl-2-(9Z-octadecenoyl)-sn-glycero-3-cytidine-5'-diphosphate + diphosphate. The catalysed reaction is 1-octadecanoyl-2-(4Z,7Z,10Z,13Z,16Z,19Z-docosahexaenoyl)-sn-glycero-3-phosphate + CTP + H(+) = 1-octadecanoyl-2-(4Z,7Z,10Z,13Z,16Z,19Z-docosahexaenoyl)-sn-glycero-3-cytidine-5'-diphosphate + diphosphate. It catalyses the reaction 1,2-di-(9Z,12Z-octadecadienoyl)-sn-glycero-3-phosphate + CTP + H(+) = 1,2-di-(9Z,12Z-octadecadienoyl)-sn-glycero-3-cytidine-5'-diphosphate + diphosphate. The enzyme catalyses 1,2-di-(9Z-octadecenoyl)-sn-glycero-3-phosphate + CTP + H(+) = 1,2-di-(9Z-octadecenoyl)-sn-glycero-3-cytidine-5'-diphosphate + diphosphate. Its pathway is phospholipid metabolism; CDP-diacylglycerol biosynthesis; CDP-diacylglycerol from sn-glycerol 3-phosphate: step 3/3. In terms of biological role, catalyzes the conversion of phosphatidic acid (PA) to CDP-diacylglycerol (CDP-DAG), an essential intermediate in the synthesis of phosphatidylglycerol, cardiolipin and phosphatidylinositol. Exhibits specificity for the nature of the acyl chains at the sn-1 and sn-2 positions in the substrate, PA and the preferred acyl chain composition is 1-stearoyl-2-arachidonoyl-sn-phosphatidic acid. Plays an important role in regulating the growth and maturation of lipid droplets which are storage organelles at the center of lipid and energy homeostasis. This chain is Phosphatidate cytidylyltransferase 2 (CDS2), found in Bos taurus (Bovine).